The sequence spans 221 residues: GTP cyclohydrolase 1 (221 aa).

Residues Cys-109, His-112, and Cys-180 each coordinate Zn(2+).

Belongs to the GTP cyclohydrolase I family. Toroid-shaped homodecamer, composed of two pentamers of five dimers.

The catalysed reaction is GTP + H2O = 7,8-dihydroneopterin 3'-triphosphate + formate + H(+). It participates in cofactor biosynthesis; 7,8-dihydroneopterin triphosphate biosynthesis; 7,8-dihydroneopterin triphosphate from GTP: step 1/1. This chain is GTP cyclohydrolase 1, found in Serratia proteamaculans (strain 568).